We begin with the raw amino-acid sequence, 398 residues long: 1-deoxy-D-xylulose 5-phosphate reductoisomerase (398 aa).

T11, G12, S13, I14, and N125 together coordinate NADPH. K126 is a 1-deoxy-D-xylulose 5-phosphate binding site. E127 contributes to the NADPH binding site. D151 is a Mn(2+) binding site. S152, E153, S186, and H209 together coordinate 1-deoxy-D-xylulose 5-phosphate. E153 contacts Mn(2+). G215 serves as a coordination point for NADPH. 1-deoxy-D-xylulose 5-phosphate contacts are provided by S222, N227, K228, and E231. E231 lines the Mn(2+) pocket.

The protein belongs to the DXR family. It depends on Mg(2+) as a cofactor. Mn(2+) is required as a cofactor.

The catalysed reaction is 2-C-methyl-D-erythritol 4-phosphate + NADP(+) = 1-deoxy-D-xylulose 5-phosphate + NADPH + H(+). It participates in isoprenoid biosynthesis; isopentenyl diphosphate biosynthesis via DXP pathway; isopentenyl diphosphate from 1-deoxy-D-xylulose 5-phosphate: step 1/6. Its function is as follows. Catalyzes the NADPH-dependent rearrangement and reduction of 1-deoxy-D-xylulose-5-phosphate (DXP) to 2-C-methyl-D-erythritol 4-phosphate (MEP). The chain is 1-deoxy-D-xylulose 5-phosphate reductoisomerase from Acinetobacter baylyi (strain ATCC 33305 / BD413 / ADP1).